The following is a 432-amino-acid chain: Adenylosuccinate synthetase (432 aa).

GTP is bound by residues 13-19 and 41-43; these read GDEGKGK and GHT. The Proton acceptor role is filled by D14. Mg(2+) is bound by residues D14 and G41. Residues 14-17, 39-42, T130, R144, Q225, T240, and R304 each bind IMP; these read DEGK and NAGH. The active-site Proton donor is H42. Substrate is bound at residue 300–306; that stretch reads ATTGRRR. GTP is bound by residues R306, 332-334, and 415-417; these read KLD and STG.

This sequence belongs to the adenylosuccinate synthetase family. Homodimer. It depends on Mg(2+) as a cofactor.

The protein localises to the cytoplasm. It catalyses the reaction IMP + L-aspartate + GTP = N(6)-(1,2-dicarboxyethyl)-AMP + GDP + phosphate + 2 H(+). It participates in purine metabolism; AMP biosynthesis via de novo pathway; AMP from IMP: step 1/2. Plays an important role in the de novo pathway of purine nucleotide biosynthesis. Catalyzes the first committed step in the biosynthesis of AMP from IMP. This is Adenylosuccinate synthetase from Sodalis glossinidius (strain morsitans).